Here is a 1761-residue protein sequence, read N- to C-terminus: Nonribosomal peptide synthetase 6 (1761 aa).

The segment at 63-468 (ERAALHPEKI…GRQDQQVKLR (406 aa)) is adenylation. The region spanning 600–675 (EATTEMELKL…SMAEKAKPVS (76 aa)) is the Carrier 1 domain. The residue at position 636 (Ser636) is an O-(pantetheine 4'-phosphoryl)serine. Residues 712-1135 (VEDVYPCTPL…AVLDPVEAQD (424 aa)) form a condensation 1 region. Carrier domains are found at residues 1169-1242 (SPNE…SNER) and 1237-1313 (SASN…EEET). 2 positions are modified to O-(pantetheine 4'-phosphoryl)serine: Ser1203 and Ser1274. A condensation 2 region spans residues 1354–1677 (IYPTRPLQQL…ESVQWFDTVV (324 aa)).

It belongs to the NRP synthetase family.

Its pathway is siderophore biosynthesis. In terms of biological role, nonribosomal peptide synthetase; part of the gene cluster that mediates the biosynthesis of hydroxamate-containing siderophores that play a critical role in virulence. Cochliobolus heterostrophus produces extracellular coprogen-type siderophores including coprogen, neocoprogen I and neocoprogen II, as well as the intracellular siderophore ferricrocin. The role of extracellular siderophores is to supply iron to the fungus during plant infection, and the intracellular ferricrocin is required for intracellular iron distribution and storage with a crucial role in ascus and ascospore development. SIDA2 catalyzes the conversion of L-ornithine to N(5)-hydroxyornithine, the first step in the biosynthesis of all hydroxamate-containing siderophores. The assembly of extracellular coprogen-type siderophores is then performed by the nonribosomal peptide synthetase (NRPS) NPS6 whereas the intracellular siderophore ferricrocin is assembled by NPS2. The protein is Nonribosomal peptide synthetase 6 of Cochliobolus heterostrophus (strain C4 / ATCC 48331 / race T) (Southern corn leaf blight fungus).